Here is a 296-residue protein sequence, read N- to C-terminus: Nucleotide-binding protein MGAS2096_Spy0550 (296 aa).

13–20 (GMSGAGKT) contributes to the ATP binding site. 63-66 (DMRS) serves as a coordination point for GTP.

It belongs to the RapZ-like family.

In terms of biological role, displays ATPase and GTPase activities. The chain is Nucleotide-binding protein MGAS2096_Spy0550 from Streptococcus pyogenes serotype M12 (strain MGAS2096).